The sequence spans 254 residues: tRNA pseudouridine synthase A (254 aa).

Asp-52 acts as the Nucleophile in catalysis. Substrate is bound at residue Tyr-111.

This sequence belongs to the tRNA pseudouridine synthase TruA family. Homodimer.

It catalyses the reaction uridine(38/39/40) in tRNA = pseudouridine(38/39/40) in tRNA. Its function is as follows. Formation of pseudouridine at positions 38, 39 and 40 in the anticodon stem and loop of transfer RNAs. In Rhizorhabdus wittichii (strain DSM 6014 / CCUG 31198 / JCM 15750 / NBRC 105917 / EY 4224 / RW1) (Sphingomonas wittichii), this protein is tRNA pseudouridine synthase A.